We begin with the raw amino-acid sequence, 508 residues long: Arabinose import ATP-binding protein AraG (508 aa).

2 consecutive ABC transporter domains span residues 5–240 (LEFQ…MVGR) and 250–496 (ARTL…LPDA). 37–44 (GENGAGKS) is an ATP binding site.

The protein belongs to the ABC transporter superfamily. Arabinose importer (TC 3.A.1.2.2) family. The complex is composed of two ATP-binding proteins (AraG), two transmembrane proteins (AraH) and a solute-binding protein (AraF).

The protein resides in the cell inner membrane. It catalyses the reaction L-arabinose(out) + ATP + H2O = L-arabinose(in) + ADP + phosphate + H(+). Its function is as follows. Part of the ABC transporter complex AraFGH involved in arabinose import. Responsible for energy coupling to the transport system. This chain is Arabinose import ATP-binding protein AraG, found in Rhizobium meliloti (strain 1021) (Ensifer meliloti).